The sequence spans 444 residues: Vacuolar protein sorting-associated protein 4B (444 aa).

Residues 4 to 82 (TNTNLQKAID…KEYLKKKEKK (79 aa)) enclose the MIT domain. A coiled-coil region spans residues 19-82 (AQEDKAGNYE…KEYLKKKEKK (64 aa)). Positions 77 to 118 (KKKEKKPQKPVKEEQSGPVDEKGNDSDGEAESDDPEKKKLQN) are disordered. The segment covering 86–101 (PVKEEQSGPVDEKGND) has biased composition (basic and acidic residues). 2 positions are modified to phosphoserine: Ser102 and Ser108. Position 174–181 (174–181 (GPPGTGKS)) interacts with ATP. Ser410 carries the phosphoserine modification.

This sequence belongs to the AAA ATPase family. Proposed to be monomeric or homodimeric in nucleotide-free form and to oligomerize upon binding to ATP to form two stacked hexameric or heptameric rings with a central pore through which ESCRT-III substrates are translocated in an ATP-dependent manner. In vitro, associates on the inside of a helical tubular structure formed by a CHMP2A-CHMP3 polymer. Interacts with CHMP1A, CHMP1B, CHMP4B and CHMP6. Interacts with CHMP2A. Interacts with VPS4A; the interaction suggests a heteromeric assembly with VPS4A. Interacts with VTA1. As to expression, high level expression seen in the kidney. It is also expressed in the heart, brain, spleen, lung, liver, skeletal muscle, and testis.

Its subcellular location is the late endosome membrane. It carries out the reaction ATP + H2O = ADP + phosphate + H(+). In terms of biological role, involved in late steps of the endosomal multivesicular bodies (MVB) pathway. Recognizes membrane-associated ESCRT-III assemblies and catalyzes their disassembly, possibly in combination with membrane fission. Redistributes the ESCRT-III components to the cytoplasm for further rounds of MVB sorting. MVBs contain intraluminal vesicles (ILVs) that are generated by invagination and scission from the limiting membrane of the endosome and mostly are delivered to lysosomes enabling degradation of membrane proteins, such as stimulated growth factor receptors, lysosomal enzymes and lipids. VPS4A/B are required for the exosomal release of SDCBP, CD63 and syndecan. Its function is as follows. (Microbial infection) In conjunction with the ESCRT machinery also appears to function in topologically equivalent membrane fission events, such as the terminal stages of cytokinesis and enveloped virus budding (lentiviruses). This is Vacuolar protein sorting-associated protein 4B from Mus musculus (Mouse).